A 359-amino-acid polypeptide reads, in one-letter code: Peptide chain release factor 1 (359 aa).

Position 236 is an N5-methylglutamine (glutamine 236).

The protein belongs to the prokaryotic/mitochondrial release factor family. Methylated by PrmC. Methylation increases the termination efficiency of RF1.

Its subcellular location is the cytoplasm. Its function is as follows. Peptide chain release factor 1 directs the termination of translation in response to the peptide chain termination codons UAG and UAA. In Streptococcus mutans serotype c (strain ATCC 700610 / UA159), this protein is Peptide chain release factor 1.